A 78-amino-acid polypeptide reads, in one-letter code: Major outer membrane lipoprotein Lpp 1 (78 aa).

The signal sequence occupies residues 1 to 20 (MNRTKLVLGAVILGSTLLAG). Residue Cys-21 is the site of N-palmitoyl cysteine attachment. The S-diacylglycerol cysteine moiety is linked to residue Cys-21. 2 repeats span residues 24–34 (NAKIDQLSSDV) and 38–48 (NAKVDQLSNDV). Residues 27–75 (IDQLSSDVQTLNAKVDQLSNDVNAMRSDVQAAKDDAARANQRLDNQATK) are a coiled coil. Residues 56–78 (QAAKDDAARANQRLDNQATKYRK) are disordered. The segment covering 68-78 (RLDNQATKYRK) has biased composition (polar residues). Lys-78 bears the N6-murein peptidoglycan lysine mark.

The protein belongs to the Lpp family. As to quaternary structure, homotrimer.

It is found in the cell outer membrane. It localises to the secreted. The protein resides in the cell wall. A highly abundant outer membrane lipoprotein that controls the distance between the inner and outer membranes. The only protein known to be covalently linked to the peptidoglycan network (PGN). Also non-covalently binds the PGN. The link between the cell outer membrane and PGN contributes to maintenance of the structural and functional integrity of the cell envelope, and maintains the correct distance between the PGN and the outer membrane. This chain is Major outer membrane lipoprotein Lpp 1, found in Salmonella paratyphi A (strain ATCC 9150 / SARB42).